Reading from the N-terminus, the 300-residue chain is Meiosis-specific cyclin crs1 (300 aa).

Positions 61–183 (IIEQEKKGLT…VLALLNFDIY (123 aa)) constitute a Cyclin N-terminal domain.

Belongs to the cyclin family. Cyclin AB subfamily.

It localises to the cytoplasm. The protein localises to the nucleus. In terms of biological role, has a role in meiotic chromosome segregation. The protein is Meiosis-specific cyclin crs1 (crs1) of Schizosaccharomyces pombe (strain 972 / ATCC 24843) (Fission yeast).